The following is a 130-amino-acid chain: Small ribosomal subunit protein uS9 (130 aa).

Belongs to the universal ribosomal protein uS9 family.

The protein is Small ribosomal subunit protein uS9 of Geobacillus sp. (strain WCH70).